The following is a 192-amino-acid chain: Peroxiredoxin tpx1 (192 aa).

Positions 3–161 (LQIGKPAPDF…ALRLLDAFQF (159 aa)) constitute a Thioredoxin domain. The active-site Cysteine sulfenic acid (-SOH) intermediate is Cys48. Residues Ser105 and Ser148 each carry the phosphoserine modification.

The protein belongs to the peroxiredoxin family. AhpC/Prx1 subfamily. Homodimer; disulfide-linked, upon oxidation. Interacts with srx1 in response to oxidative stress. Interacts with pap1 via transient disulfide linkages. Post-translationally, the enzyme can be inactivated by further oxidation of the cysteine sulfenic acid (C(P)-SOH) to sulphinic acid (C(P)-SO2H) instead of its condensation to a disulfide bond. It can be reactivated by forming a transient disulfide bond with sulfiredoxin srx1, which reduces the cysteine sulfinic acid in an ATP- and Mg-dependent manner.

Its subcellular location is the cytoplasm. The protein localises to the nucleus. It catalyses the reaction a hydroperoxide + [thioredoxin]-dithiol = an alcohol + [thioredoxin]-disulfide + H2O. Thiol-specific peroxidase that catalyzes the reduction of hydrogen peroxide and organic hydroperoxides to water and alcohols, respectively. Plays a role in cell protection against oxidative stress by detoxifying peroxides and as sensor of hydrogen peroxide-mediated signaling events. Relays hydrogen peroxide as a signal to the transcription factor pap1 by inducing the formation of intramolecular disulfide bonds in pap1, which causes its nuclear accumulation and activation. Reduced by srx1 and this regulation acts as a molecular switch controlling the transcriptional response to hydrogen peroxide. This is Peroxiredoxin tpx1 (tpx1) from Schizosaccharomyces pombe (strain 972 / ATCC 24843) (Fission yeast).